The following is a 306-amino-acid chain: Porphobilinogen deaminase (306 aa).

Cys-240 is modified (S-(dipyrrolylmethanemethyl)cysteine).

This sequence belongs to the HMBS family. Monomer. Dipyrromethane serves as cofactor.

It catalyses the reaction 4 porphobilinogen + H2O = hydroxymethylbilane + 4 NH4(+). Its pathway is porphyrin-containing compound metabolism; protoporphyrin-IX biosynthesis; coproporphyrinogen-III from 5-aminolevulinate: step 2/4. Tetrapolymerization of the monopyrrole PBG into the hydroxymethylbilane pre-uroporphyrinogen in several discrete steps. This is Porphobilinogen deaminase from Thiobacillus denitrificans (strain ATCC 25259 / T1).